Here is a 378-residue protein sequence, read N- to C-terminus: Anhydro-N-acetylmuramic acid kinase (378 aa).

An ATP-binding site is contributed by 23–30 (GTSMDGAD).

It belongs to the anhydro-N-acetylmuramic acid kinase family.

The catalysed reaction is 1,6-anhydro-N-acetyl-beta-muramate + ATP + H2O = N-acetyl-D-muramate 6-phosphate + ADP + H(+). Its pathway is amino-sugar metabolism; 1,6-anhydro-N-acetylmuramate degradation. The protein operates within cell wall biogenesis; peptidoglycan recycling. Catalyzes the specific phosphorylation of 1,6-anhydro-N-acetylmuramic acid (anhMurNAc) with the simultaneous cleavage of the 1,6-anhydro ring, generating MurNAc-6-P. Is required for the utilization of anhMurNAc either imported from the medium or derived from its own cell wall murein, and thus plays a role in cell wall recycling. The protein is Anhydro-N-acetylmuramic acid kinase of Bordetella bronchiseptica (strain ATCC BAA-588 / NCTC 13252 / RB50) (Alcaligenes bronchisepticus).